An 86-amino-acid chain; its full sequence is MIOREX complex component 7 (86 aa).

In terms of assembly, associates with the mitochondrial ribosome.

The protein localises to the mitochondrion. Component of MIOREX complexes, large expressome-like assemblies of ribosomes with factors involved in all the steps of post-transcriptional gene expression. This is MIOREX complex component 7 from Saccharomyces cerevisiae (strain ATCC 204508 / S288c) (Baker's yeast).